The chain runs to 477 residues: Ribulose bisphosphate carboxylase large chain (477 aa).

Positions 1–2 (MS) are excised as a propeptide. Residue P3 is modified to N-acetylproline. Substrate contacts are provided by N123 and T173. K175 (proton acceptor) is an active-site residue. K177 contacts substrate. K201, D203, and E204 together coordinate Mg(2+). K201 carries the post-translational modification N6-carboxylysine. H294 functions as the Proton acceptor in the catalytic mechanism. Positions 295, 327, and 379 each coordinate substrate.

Belongs to the RuBisCO large chain family. Type I subfamily. Heterohexadecamer of 8 large chains and 8 small chains; disulfide-linked. The disulfide link is formed within the large subunit homodimers. Mg(2+) is required as a cofactor. The disulfide bond which can form in the large chain dimeric partners within the hexadecamer appears to be associated with oxidative stress and protein turnover.

Its subcellular location is the plastid. It is found in the chloroplast. It catalyses the reaction 2 (2R)-3-phosphoglycerate + 2 H(+) = D-ribulose 1,5-bisphosphate + CO2 + H2O. It carries out the reaction D-ribulose 1,5-bisphosphate + O2 = 2-phosphoglycolate + (2R)-3-phosphoglycerate + 2 H(+). Its function is as follows. RuBisCO catalyzes two reactions: the carboxylation of D-ribulose 1,5-bisphosphate, the primary event in carbon dioxide fixation, as well as the oxidative fragmentation of the pentose substrate in the photorespiration process. Both reactions occur simultaneously and in competition at the same active site. In Lolium perenne (Perennial ryegrass), this protein is Ribulose bisphosphate carboxylase large chain.